The sequence spans 867 residues: Coiled-coil domain-containing protein 178 (867 aa).

Coiled coils occupy residues 153–204 (DEKC…KIDS), 233–414 (WHLE…ENQY), 445–470 (ACTK…TNES), and 662–696 (MIFY…KNKF).

This Homo sapiens (Human) protein is Coiled-coil domain-containing protein 178 (CCDC178).